The chain runs to 1212 residues: Probable serine/threonine-protein kinase DDB_G0284491 (1212 aa).

Residues 197-217 (LFHSFSLLNLYVYLIIVIRII) traverse the membrane as a helical segment. N-linked (GlcNAc...) asparagine glycosylation is found at Asn-229, Asn-299, Asn-309, Asn-328, Asn-335, Asn-341, Asn-344, Asn-391, Asn-419, Asn-422, Asn-426, Asn-427, Asn-435, and Asn-499. Positions 288 to 329 (LNNNNDNNLNNNNSNNNLNNNNNSNSNFNNDNNLNSNINSND) are disordered. 2 disordered regions span residues 412–439 (GNSN…NSGG) and 489–517 (IIKN…DYEE). Residues 489–507 (IIKNNNNNNNNNSNNNNNN) are compositionally biased toward low complexity. Residues 508–517 (NDEDDSDYEE) show a composition bias toward acidic residues. A helical transmembrane segment spans residues 673–693 (IQIFDDYSLIIALRLLMNFIL). The span at 703–720 (VPPPPTQPSSRPQSPPTV) shows a compositional bias: pro residues. Disordered stretches follow at residues 703-733 (VPPP…HHSG) and 751-813 (EVVS…NNNN). Residues 865–1182 (ETEIEPFASG…EVYNDLQDIY (318 aa)) form the Protein kinase domain. Residues 871-879 (FASGGQANI) and Lys-924 each bind ATP. The active-site Proton acceptor is the Asp-1035.

It belongs to the protein kinase superfamily. Ser/Thr protein kinase family.

The protein localises to the membrane. The catalysed reaction is L-seryl-[protein] + ATP = O-phospho-L-seryl-[protein] + ADP + H(+). The enzyme catalyses L-threonyl-[protein] + ATP = O-phospho-L-threonyl-[protein] + ADP + H(+). The polypeptide is Probable serine/threonine-protein kinase DDB_G0284491 (Dictyostelium discoideum (Social amoeba)).